Consider the following 387-residue polypeptide: 3-ketoacyl-CoA thiolase (387 aa).

Cys91 acts as the Acyl-thioester intermediate in catalysis. Residues His343 and Cys373 each act as proton acceptor in the active site.

Belongs to the thiolase-like superfamily. Thiolase family. In terms of assembly, heterotetramer of two alpha chains (FadB) and two beta chains (FadA).

Its subcellular location is the cytoplasm. The enzyme catalyses an acyl-CoA + acetyl-CoA = a 3-oxoacyl-CoA + CoA. Its pathway is lipid metabolism; fatty acid beta-oxidation. Catalyzes the final step of fatty acid oxidation in which acetyl-CoA is released and the CoA ester of a fatty acid two carbons shorter is formed. This is 3-ketoacyl-CoA thiolase from Serratia proteamaculans (strain 568).